The sequence spans 486 residues: Homoserine O-acetyltransferase (486 aa).

Residues 66-436 (NVLVICHALT…PEGHDAFLLE (371 aa)) form the AB hydrolase-1 domain. S162 is a catalytic residue. Residue S162 is the Nucleophile of the active site. Positions 248 to 274 (KFSRRSPSIAQQQKAQKAEVRKPSTVS) are disordered. Residues 250–262 (SRRSPSIAQQQKA) show a composition bias toward polar residues. Residues D401 and H430 contribute to the active site.

The protein belongs to the AB hydrolase superfamily. MetX family.

The catalysed reaction is L-homoserine + acetyl-CoA = O-acetyl-L-homoserine + CoA. It participates in amino-acid biosynthesis; L-methionine biosynthesis via de novo pathway; O-acetyl-L-homoserine from L-homoserine: step 1/1. In terms of biological role, commits homoserine to the methionine biosynthesis pathway by catalyzing its O-acetylation. This is Homoserine O-acetyltransferase (MET2) from Saccharomyces pastorianus (Lager yeast).